Reading from the N-terminus, the 185-residue chain is Large ribosomal subunit protein uL5 (185 aa).

This sequence belongs to the universal ribosomal protein uL5 family. Part of the 50S ribosomal subunit; part of the 5S rRNA/L5/L18/L25 subcomplex. Contacts the 5S rRNA and the P site tRNA. Forms a bridge to the 30S subunit in the 70S ribosome.

This is one of the proteins that bind and probably mediate the attachment of the 5S RNA into the large ribosomal subunit, where it forms part of the central protuberance. In the 70S ribosome it contacts protein S13 of the 30S subunit (bridge B1b), connecting the 2 subunits; this bridge is implicated in subunit movement. Contacts the P site tRNA; the 5S rRNA and some of its associated proteins might help stabilize positioning of ribosome-bound tRNAs. This chain is Large ribosomal subunit protein uL5, found in Bradyrhizobium diazoefficiens (strain JCM 10833 / BCRC 13528 / IAM 13628 / NBRC 14792 / USDA 110).